The sequence spans 62 residues: MAKCDICSKDVLFGLKVSHSNRKTNRTWKPNIRRIKIIENGTSKTANVCTRCLRSNKVTRAI.

This sequence belongs to the bacterial ribosomal protein bL28 family.

The polypeptide is Large ribosomal subunit protein bL28 (Acetivibrio thermocellus (strain ATCC 27405 / DSM 1237 / JCM 9322 / NBRC 103400 / NCIMB 10682 / NRRL B-4536 / VPI 7372) (Clostridium thermocellum)).